A 92-amino-acid polypeptide reads, in one-letter code: Small ribosomal subunit protein uS19 (92 aa).

Belongs to the universal ribosomal protein uS19 family.

Protein S19 forms a complex with S13 that binds strongly to the 16S ribosomal RNA. In Parvibaculum lavamentivorans (strain DS-1 / DSM 13023 / NCIMB 13966), this protein is Small ribosomal subunit protein uS19.